Here is a 1030-residue protein sequence, read N- to C-terminus: MMS19 nucleotide excision repair protein homolog (1030 aa).

N-acetylalanine is present on A2. HEAT repeat units follow at residues 866 to 904 (QRFF…RLPK), 908 to 946 (LPEL…EAPQ), 949 to 987 (SLHV…LPTP), and 990 to 1028 (LPYK…LGSP). Position 1027 is a phosphoserine (S1027).

The protein belongs to the MET18/MMS19 family. In terms of assembly, component of the CIA complex. In the CIA complex, interacts directly with CIAO2B and CIAO3. Component of the MMXD complex, composed of CIAO1, ERCC2, CIAO2B, MMS19 and SLC25A5. Interacts with CIAO2B; the interaction is direct. Interacts with ERCC2/XPD; the interaction is direct. Interacts with ERCC3/XPB and NCOA3/RAC3. Interacts with RTEL1; the interaction mediates the association of RTEL1 with the CIA complex. Interacts with BRIP1. Interacts with KIF4A; the interaction facilitates the transfer of Fe-S clusters to KIF4A to ensure proper localization of KIF4A to the mitotic machinery components. Interacts with CCDC117; the interaction is indirect. Post-translationally, ubiquitinated; undergoes 'Lys-48'-linked polyubiquitination.

The protein resides in the nucleus. The protein localises to the cytoplasm. It is found in the cytoskeleton. Its subcellular location is the spindle. Key component of the cytosolic iron-sulfur protein assembly (CIA) complex, a multiprotein complex that mediates the incorporation of iron-sulfur cluster into apoproteins specifically involved in DNA metabolism and genomic integrity. In the CIA complex, MMS19 acts as an adapter between early-acting CIA components and a subset of cellular target Fe/S proteins such as ERCC2/XPD, FANCJ and RTEL1, thereby playing a key role in nucleotide excision repair (NER), homologous recombination-mediated double-strand break DNA repair, DNA replication and RNA polymerase II (POL II) transcription. As a CIA complex component and in collaboration with CIAO1 and CIAO2, binds to and facilitates the assembly of most cytosolic-nuclear Fe/S proteins. As part of the mitotic spindle-associated MMXD complex, plays a role in chromosome segregation, probably by facilitating iron-sulfur cluster assembly into ERCC2/XPD. Together with CIAO2, facilitates the transfer of Fe-S clusters to the motor protein KIF4A, which ensures proper localization of KIF4A to mitotic machinery components to promote the progression of mitosis. Indirectly acts as a transcriptional coactivator of estrogen receptor (ER), via its role in iron-sulfur insertion into some component of the TFIIH-machinery. This Bos taurus (Bovine) protein is MMS19 nucleotide excision repair protein homolog.